A 527-amino-acid polypeptide reads, in one-letter code: Tetanolysin (527 aa).

Residues 1–32 form the signal peptide; that stretch reads MNKNVLKFVSRSLLIFSMTGLISNYNSSNVLA. 4 consecutive transmembrane segments (beta stranded) span residues 215 to 228, 235 to 244, 313 to 322, and 330 to 342; these read QSQL…NFKA, IDFDSIFKGE, SSHVKAAFKA, and SSNA…LNQS. The Conserved undecapeptide motif lies at 484 to 494; the sequence is ECTGLAWEWWR. A Cholesterol binding motif is present at residues 516 to 517; it reads TL.

The protein belongs to the cholesterol-dependent cytolysin family. Homooligomeric pore complex containing 35-50 subunits; when inserted in the host membrane. Purified 48 and 53 kDa proteins with 4 different pIs (6.1, 5.6, 5.3 and 6.6) in decreasing order of activity.

The protein localises to the secreted. It is found in the host cell membrane. Its activity is regulated as follows. Cytolysis of host cells is inhibited by cholesterol. Functionally, a cholesterol-dependent toxin that causes cytolysis by forming pores in cholesterol-containing host membranes. After binding to target membranes, the protein undergoes a major conformation change, leading to its insertion in the host membrane and formation of an oligomeric pore complex. Cholesterol is required for binding to host membranes, membrane insertion and pore formation; cholesterol binding is mediated by a Thr-Leu pair in the C-terminus. This Clostridium tetani (strain Massachusetts / E88) protein is Tetanolysin.